A 174-amino-acid chain; its full sequence is Ribosome maturation factor RimP (174 aa).

The protein belongs to the RimP family.

It localises to the cytoplasm. In terms of biological role, required for maturation of 30S ribosomal subunits. The sequence is that of Ribosome maturation factor RimP from Acinetobacter baumannii (strain SDF).